The chain runs to 230 residues: UPF0758 protein plu4865 (230 aa).

Positions 108-230 constitute an MPN domain; it reads IMSSPSVTQE…CVSFAERGWI (123 aa). Zn(2+)-binding residues include His179, His181, and Asp192. The short motif at 179–192 is the JAMM motif element; it reads HNHPSGHAEPSLAD.

This sequence belongs to the UPF0758 family. YicR subfamily.

The chain is UPF0758 protein plu4865 from Photorhabdus laumondii subsp. laumondii (strain DSM 15139 / CIP 105565 / TT01) (Photorhabdus luminescens subsp. laumondii).